The primary structure comprises 485 residues: UDP-N-acetylmuramoyl-L-alanyl-D-glutamate--2,6-diaminopimelate ligase (485 aa).

2 residues coordinate UDP-N-acetyl-alpha-D-muramoyl-L-alanyl-D-glutamate: Leu-27 and Ser-29. 106–112 (GTSGKTS) serves as a coordination point for ATP. UDP-N-acetyl-alpha-D-muramoyl-L-alanyl-D-glutamate-binding positions include 148-149 (TT), Ser-175, Gln-181, and Arg-183. Position 215 is an N6-carboxylysine (Lys-215). Residues Arg-382, 406–409 (DNPR), Gly-454, and Glu-458 each bind meso-2,6-diaminopimelate. The short motif at 406–409 (DNPR) is the Meso-diaminopimelate recognition motif element.

The protein belongs to the MurCDEF family. MurE subfamily. It depends on Mg(2+) as a cofactor. Carboxylation is probably crucial for Mg(2+) binding and, consequently, for the gamma-phosphate positioning of ATP.

It is found in the cytoplasm. It catalyses the reaction UDP-N-acetyl-alpha-D-muramoyl-L-alanyl-D-glutamate + meso-2,6-diaminopimelate + ATP = UDP-N-acetyl-alpha-D-muramoyl-L-alanyl-gamma-D-glutamyl-meso-2,6-diaminopimelate + ADP + phosphate + H(+). It participates in cell wall biogenesis; peptidoglycan biosynthesis. Catalyzes the addition of meso-diaminopimelic acid to the nucleotide precursor UDP-N-acetylmuramoyl-L-alanyl-D-glutamate (UMAG) in the biosynthesis of bacterial cell-wall peptidoglycan. The sequence is that of UDP-N-acetylmuramoyl-L-alanyl-D-glutamate--2,6-diaminopimelate ligase from Bradyrhizobium diazoefficiens (strain JCM 10833 / BCRC 13528 / IAM 13628 / NBRC 14792 / USDA 110).